We begin with the raw amino-acid sequence, 231 residues long: Large ribosomal subunit protein uL1 (231 aa).

This sequence belongs to the universal ribosomal protein uL1 family. As to quaternary structure, part of the 50S ribosomal subunit.

Its function is as follows. Binds directly to 23S rRNA. The L1 stalk is quite mobile in the ribosome, and is involved in E site tRNA release. Protein L1 is also a translational repressor protein, it controls the translation of the L11 operon by binding to its mRNA. This Acinetobacter baylyi (strain ATCC 33305 / BD413 / ADP1) protein is Large ribosomal subunit protein uL1.